The following is a 451-amino-acid chain: Midnolin-B (451 aa).

The Ubiquitin-like domain occupies 20-94; sequence MNLNIQSTTG…LTLLPSVEAG (75 aa). Disordered stretches follow at residues 187–254, 331–372, and 388–427; these read ASCT…RSRK, RNAK…QTEN, and QKRL…EGSL. 3 stretches are compositionally biased toward low complexity: residues 190-205, 237-250, and 336-347; these read TPGS…TSST, STRG…SPSS, and TSPQSTGPQQTT. A compositionally biased stretch (basic and acidic residues) spans 363-372; that stretch reads SGDRLRQTEN. Positions 388 to 397 are enriched in basic residues; that stretch reads QKRLRRKARR. A compositionally biased stretch (low complexity) spans 413 to 426; sequence RTSSNSSTSSGEGS.

It is found in the nucleus. It localises to the cytoplasm. The protein resides in the cytosol. The protein localises to the nucleolus. Its function is as follows. Facilitates ubiquitin-independent proteasomal degradation of polycomb protein CBX4. Plays a role in inhibiting the activity of glucokinase GCK and both glucose-induced and basal insulin secretion. The protein is Midnolin-B (midn-b) of Xenopus laevis (African clawed frog).